A 480-amino-acid chain; its full sequence is Glutamate--tRNA ligase (480 aa).

The short motif at 9 to 19 (PSPTGNLHIGT) is the 'HIGH' region element. The short motif at 247–251 (KLSKR) is the 'KMSKS' region element. K250 lines the ATP pocket.

The protein belongs to the class-I aminoacyl-tRNA synthetase family. Glutamate--tRNA ligase type 1 subfamily. Monomer.

It localises to the cytoplasm. The catalysed reaction is tRNA(Glu) + L-glutamate + ATP = L-glutamyl-tRNA(Glu) + AMP + diphosphate. Functionally, catalyzes the attachment of glutamate to tRNA(Glu) in a two-step reaction: glutamate is first activated by ATP to form Glu-AMP and then transferred to the acceptor end of tRNA(Glu). In Nostoc sp. (strain PCC 7120 / SAG 25.82 / UTEX 2576), this protein is Glutamate--tRNA ligase.